A 61-amino-acid polypeptide reads, in one-letter code: Small ribosomal subunit protein uS14 (61 aa).

4 residues coordinate Zn(2+): cysteine 24, cysteine 27, cysteine 40, and cysteine 43.

Belongs to the universal ribosomal protein uS14 family. Zinc-binding uS14 subfamily. As to quaternary structure, part of the 30S ribosomal subunit. Contacts proteins S3 and S10. It depends on Zn(2+) as a cofactor.

Binds 16S rRNA, required for the assembly of 30S particles and may also be responsible for determining the conformation of the 16S rRNA at the A site. In Leptospira borgpetersenii serovar Hardjo-bovis (strain JB197), this protein is Small ribosomal subunit protein uS14.